Reading from the N-terminus, the 204-residue chain is Bcl-2-like protein 10 (204 aa).

The BH1 motif lies at 86–105; it reads LSDSPGPTWGRVVTLVTFAG. The required for Ca(2+) binding stretch occupies residues 118–133; sequence WKKWGFQPRLKEQEGD. Residues K119, K120, and K128 each participate in a glycyl lysine isopeptide (Lys-Gly) (interchain with G-Cter in ubiquitin) cross-link. The BH2 motif lies at 156–167; that stretch reads WLQAQGGWDGFC. A helical membrane pass occupies residues 183-200; that stretch reads LVQAFLSCLLTTAFIYLW.

It belongs to the Bcl-2 family. As to quaternary structure, interacts with BAX. Interacts with BCL2 and BCL2L1/BCLX. Interacts with APAF1. Interacts with ITPR1, ITPR2 and ITPR3; the interaction with ITPR1 is increased in the presence of AHCLY1. Interacts with AHCYL1. Interacts with HIP1R (via ENTH and I/LWEQ domains). Interacts with CASP9. Interacts with BCL2L11/BIM. Interacts with BIK. Interacts with UBQLN4. Interacts with NME2/NM23-H2. Interacts with PMAIP1/NOXA. Interacts with TPX2. Interacts with UBQLN1; in the cytoplasm. Interacts (via BH1 domain) with BECN1. Requires Ca(2+) as cofactor. Monoubiquitinated by UBQLN1; results in stabilization of BCL2L10 protein abundance and in relocalization from mitochondria to cytoplasm. In terms of tissue distribution, widely expressed in adult tissues. Preferentially expressed in lung, liver and kidney.

It is found in the mitochondrion. The protein localises to the nucleus membrane. The protein resides in the endoplasmic reticulum. Its subcellular location is the cytoplasm. It localises to the cytoskeleton. It is found in the spindle. Functionally, promotes cell survival by suppressing apoptosis induced by BAX but not BAK. Increases binding of AHCYL1/IRBIT to ITPR1. Reduces ITPR1-mediated calcium release from the endoplasmic reticulum cooperatively with AHCYL1/IRBIT under normal cellular conditions. Under apoptotic stress conditions, dissociates from ITPR1 and is displaced from mitochondria-associated endoplasmic reticulum membranes, leading to increased Ca(2+) transfer to mitochondria which promotes apoptosis. Required for the correct formation of the microtubule organizing center during oocyte cell division, potentially via regulation of protein abundance and localization of other microtubule organizing center components such as AURKA and TPX2. The chain is Bcl-2-like protein 10 from Homo sapiens (Human).